Consider the following 345-residue polypeptide: G-protein coupled receptor str-33 (345 aa).

Residues 1–11 (MTVNLRDLSRT) are Extracellular-facing. A helical transmembrane segment spans residues 12-32 (IAEFAFLTALVCNSLLIYLTA). Residues 33 to 37 (RRTKN) are Cytoplasmic-facing. The chain crosses the membrane as a helical span at residues 38-58 (ITGAYKYMIILFALLGLIFSC). The Extracellular segment spans residues 59-92 (TEMLARPFVHNFNASFVYFSLSNDLSEFKSLVQM). An N-linked (GlcNAc...) asparagine glycan is attached at Asn71. Residues 93-113 (LLVLYSGLYSSLISFVAVQFI) form a helical membrane-spanning segment. The Cytoplasmic portion of the chain corresponds to 114–133 (YRYMVLVNANLLESWFTGWK). A helical transmembrane segment spans residues 134-154 (LVFWVFYVIFFGFAWSASVYF). Topologically, residues 155 to 204 (CLFPDTYSYNYIRTEFKDVYNIGVDRVAIFILVAYEKHPSSEEYKLRPAS) are extracellular. A helical membrane pass occupies residues 205–225 (VIMIAGTISILVIQYSIMLFC). Over 226–258 (GASMHRQMNEKLKNFSPDNQRLQKQFFKTLLLQ) the chain is Cytoplasmic. A helical transmembrane segment spans residues 259 to 279 (ISVPTVLFHMPIFPVLLGPFF). The Extracellular segment spans residues 280-288 (NFEISAESG). The helical transmembrane segment at 289–309 (IIYSLFSLYPPIDGLIIMTVV) threads the bilayer. At 310-345 (TDYRIALTELFLGSHSGAQVEVIPVEVVSILNFSLL) the chain is on the cytoplasmic side.

This sequence belongs to the nematode receptor-like protein str family. As to expression, detected in ALM and PLM mechanosensory neurons and head neurons.

It localises to the cell membrane. Regulates egg-laying and locomotion. Likely to act upstream of goa-1 to suppress 5-hydroxytryptamine (5-HT) biosynthesis in hermaphrodite-specific neurons (HSNs) through inhibition of tph-1 transcription. The protein is G-protein coupled receptor str-33 of Caenorhabditis elegans.